A 251-amino-acid polypeptide reads, in one-letter code: Probable transcriptional regulatory protein MSMEG_2940/MSMEI_2866 (251 aa).

This sequence belongs to the TACO1 family.

It localises to the cytoplasm. The chain is Probable transcriptional regulatory protein MSMEG_2940/MSMEI_2866 from Mycolicibacterium smegmatis (strain ATCC 700084 / mc(2)155) (Mycobacterium smegmatis).